The following is a 408-amino-acid chain: Cytochrome P450 55A3 (408 aa).

Cys357 contributes to the heme binding site.

It belongs to the cytochrome P450 family. It depends on heme as a cofactor.

This chain is Cytochrome P450 55A3 (CYP55A3), found in Fusarium lichenicola (Cylindrocarpon lichenicola).